The primary structure comprises 175 residues: Ribosome maturation factor RimM (175 aa).

One can recognise a PRC barrel domain in the interval glutamate 100 to leucine 173.

Belongs to the RimM family. Binds ribosomal protein uS19.

Its subcellular location is the cytoplasm. Functionally, an accessory protein needed during the final step in the assembly of 30S ribosomal subunit, possibly for assembly of the head region. Essential for efficient processing of 16S rRNA. May be needed both before and after RbfA during the maturation of 16S rRNA. It has affinity for free ribosomal 30S subunits but not for 70S ribosomes. This chain is Ribosome maturation factor RimM, found in Geobacillus thermodenitrificans (strain NG80-2).